A 216-amino-acid polypeptide reads, in one-letter code: Elongation factor Ts (216 aa).

The involved in Mg(2+) ion dislocation from EF-Tu stretch occupies residues 81–84; it reads TDFV.

This sequence belongs to the EF-Ts family.

It localises to the cytoplasm. Its function is as follows. Associates with the EF-Tu.GDP complex and induces the exchange of GDP to GTP. It remains bound to the aminoacyl-tRNA.EF-Tu.GTP complex up to the GTP hydrolysis stage on the ribosome. The chain is Elongation factor Ts from Geotalea daltonii (strain DSM 22248 / JCM 15807 / FRC-32) (Geobacter daltonii).